The following is a 237-amino-acid chain: Ribonuclease 3 (237 aa).

The RNase III domain occupies 8 to 134; sequence RSALLEKLGV…VIGAVYLDAG (127 aa). E47 contacts Mg(2+). D51 is an active-site residue. Residues D120 and E123 each coordinate Mg(2+). The active site involves E123. In terms of domain architecture, DRBM spans 161-229; the sequence is DPKTSLQEAA…ALSAWTALTN (69 aa).

The protein belongs to the ribonuclease III family. As to quaternary structure, homodimer. Requires Mg(2+) as cofactor.

The protein resides in the cytoplasm. It catalyses the reaction Endonucleolytic cleavage to 5'-phosphomonoester.. Functionally, digests double-stranded RNA. Involved in the processing of primary rRNA transcript to yield the immediate precursors to the large and small rRNAs (23S and 16S). Processes some mRNAs, and tRNAs when they are encoded in the rRNA operon. Processes pre-crRNA and tracrRNA of type II CRISPR loci if present in the organism. The sequence is that of Ribonuclease 3 from Leifsonia xyli subsp. xyli (strain CTCB07).